The sequence spans 656 residues: MSLHSTFKKISPTTLLKQEDWEGLCLYFSQHPEKVRDSAGNEQNIILFAIACLRKDETDVGLTLLSDRVLTAKNGRDLLRRWVISPLASSQPDAVLQVVNKLLAVNVCQPEDVLLVASVLLKSKQYATVADLAEQAWLAFSGNSQIFALHLRTLVLMDKELQAISLARTQAQEVPPRGDMIATCLSFLNKSRLPEDHDLARALLPFFALERQESAGLAVDTLCAVGKYQEAIQTGESALARGLDGAALRRSLGLAYYQSGRSREAKLQAAEHWRHALQFNSDNVRIVTLYADALIRTGQNEKAIPLLQQSLATHPDLPYVRAMYARALRQVGQYTAASDEFVQLAREKGVTSKWNRYAAAALLQAGKTSEAESVFEHYIQARASHLPQSFEEGLLALDGQISAVNLPPERLDWAWEVAGRQSGIERDEWERRAKWGYLADNFLLDWLECRGEQADEPMYRLADISHVEQFFQRLQLDQRGCIIVSAHLGAMYAGPMILSLLEMNSKWVASTPGVLKGGYGERLISVSDKSEADVVRACMQTLHSGQSLVVAIDGALNLSAPTIDFFGQQITYSTFCSRLAWKMHLPTVFSVPIWKNRHIHFVLERMVDPLKFESQLSFTERWKENYLQCVTRILQSDPENLRLSGGIWRNIIRRDS.

Functionally, may be involved in translocation of the Vi antigen. This Salmonella typhi protein is Vi polysaccharide export protein VexE (vexE).